The primary structure comprises 209 residues: Glycerol-3-phosphate acyltransferase (209 aa).

The next 5 membrane-spanning stretches (helical) occupy residues 13-33, 63-83, 94-114, 127-147, and 151-171; these read ALIA…GLLL, LAAA…LIAQ, PGLL…WLGF, LLGI…SIAF, and YSSL…WILG.

This sequence belongs to the PlsY family. As to quaternary structure, probably interacts with PlsX.

It is found in the cell inner membrane. It catalyses the reaction an acyl phosphate + sn-glycerol 3-phosphate = a 1-acyl-sn-glycero-3-phosphate + phosphate. Its pathway is lipid metabolism; phospholipid metabolism. Catalyzes the transfer of an acyl group from acyl-phosphate (acyl-PO(4)) to glycerol-3-phosphate (G3P) to form lysophosphatidic acid (LPA). This enzyme utilizes acyl-phosphate as fatty acyl donor, but not acyl-CoA or acyl-ACP. The chain is Glycerol-3-phosphate acyltransferase from Allorhizobium ampelinum (strain ATCC BAA-846 / DSM 112012 / S4) (Agrobacterium vitis (strain S4)).